The sequence spans 466 residues: cAMP-dependent protein kinase regulatory subunit (466 aa).

The dimerization and phosphorylation stretch occupies residues 25–231 (QFAANYFTKR…RLEKAVGKNF (207 aa)). Residues 71 to 80 (ASLSHGSSKA) show a composition bias toward low complexity. Disordered stretches follow at residues 71-90 (ASLS…ISSS), 109-139 (STHI…PGIF), 154-179 (NSSV…VVNP), and 193-218 (SVSG…KSPE). The segment covering 81–90 (NASQSGISSS) has biased composition (polar residues). Basic and acidic residues predominate over residues 109–118 (STHIVDHLDS). Residue Ser-193 is modified to Phosphoserine. Basic and acidic residues predominate over residues 200 to 218 (QPDHLDDWKPENFQEKSPE). 3',5'-cyclic AMP-binding positions include 232–347 (LFNK…LLKN), Glu-297, Arg-306, 350–466 (ILKS…RSKH), Glu-416, and Arg-425.

The protein belongs to the cAMP-dependent kinase regulatory chain family. Tetramer, composed of 2 regulatory (R) and 2 catalytic (C) subunits. In the presence of cAMP it dissociates into 2 active monomeric C subunits and an R dimer.

This chain is cAMP-dependent protein kinase regulatory subunit (PKAR), found in Kluyveromyces lactis (strain ATCC 8585 / CBS 2359 / DSM 70799 / NBRC 1267 / NRRL Y-1140 / WM37) (Yeast).